The following is a 226-amino-acid chain: UPF0758 protein CHY_0341 (226 aa).

In terms of domain architecture, MPN spans 104–226 (NFLNPDDVYN…YISMKAERLF (123 aa)). His-175, His-177, and Asp-188 together coordinate Zn(2+). The JAMM motif signature appears at 175 to 188 (HNHPSGDPTPSKED).

The protein belongs to the UPF0758 family.

This chain is UPF0758 protein CHY_0341, found in Carboxydothermus hydrogenoformans (strain ATCC BAA-161 / DSM 6008 / Z-2901).